The sequence spans 356 residues: MKRDLLLTKIEEYKNIMPWYVLDYYQSKLSVPYSFTTLYEYLKEYKRFFEWLIDSDLSKAARIADVDLTTLEHLSKKDMEAFILYLRERPSLNTYSTKKGVSQTTINRTLSALSSLYKYLTEEVENEHGEPYFYRNVMKKVATKKKRETLAARAENIKQKLFLGDETMAFLDYVDKEYEYKLSNRAKASFRKNKERDLAIIALLLASGIRLSEAVNLDLKDVNLNMMLVEVTRKGGKRDSVNVAAFAKPHLEAYLSVRKDRYQAEKQDVAFFLTAYRGLPNRIDASSIEKMVGKYSESFKIRVTPHKLRHTLATRLYDTTKSQVLVSHQLGHASTQVTDLYTHIVNDEQKNALDKL.

Positions isoleucine 16–threonine 121 constitute a Core-binding (CB) domain. Positions alanine 169–aspartate 354 constitute a Tyr recombinase domain. Catalysis depends on residues arginine 210, lysine 234, histidine 306, arginine 309, and histidine 332. The active-site O-(3'-phospho-DNA)-tyrosine intermediate is the tyrosine 341.

The protein belongs to the 'phage' integrase family. XerS subfamily.

It is found in the cytoplasm. FtsK is required for recombination. In terms of biological role, site-specific tyrosine recombinase, which acts by catalyzing the cutting and rejoining of the recombining DNA molecules. Essential to convert dimers of the bacterial chromosome into monomers to permit their segregation at cell division. In Streptococcus equi subsp. zooepidemicus (strain MGCS10565), this protein is Tyrosine recombinase XerS.